The primary structure comprises 322 residues: tRNA dimethylallyltransferase (322 aa).

An ATP-binding site is contributed by 18 to 25; sequence GPTASGKS. A substrate-binding site is contributed by 20-25; sequence TASGKS. Interaction with substrate tRNA regions lie at residues 43 to 46 and 167 to 171; these read DSRQ and QRLVR.

It belongs to the IPP transferase family. Monomer. Mg(2+) serves as cofactor.

It catalyses the reaction adenosine(37) in tRNA + dimethylallyl diphosphate = N(6)-dimethylallyladenosine(37) in tRNA + diphosphate. Catalyzes the transfer of a dimethylallyl group onto the adenine at position 37 in tRNAs that read codons beginning with uridine, leading to the formation of N6-(dimethylallyl)adenosine (i(6)A). This chain is tRNA dimethylallyltransferase, found in Chlorobium phaeobacteroides (strain BS1).